Here is a 345-residue protein sequence, read N- to C-terminus: Phenylalanine--tRNA ligase alpha subunit (345 aa).

E253 is a binding site for Mg(2+).

The protein belongs to the class-II aminoacyl-tRNA synthetase family. Phe-tRNA synthetase alpha subunit type 1 subfamily. In terms of assembly, tetramer of two alpha and two beta subunits. Mg(2+) serves as cofactor.

The protein resides in the cytoplasm. It catalyses the reaction tRNA(Phe) + L-phenylalanine + ATP = L-phenylalanyl-tRNA(Phe) + AMP + diphosphate + H(+). This Lawsonia intracellularis (strain PHE/MN1-00) protein is Phenylalanine--tRNA ligase alpha subunit.